Reading from the N-terminus, the 245-residue chain is Lytic switch protein BZLF1 (245 aa).

Residues 1–167 (MMDPNSTSED…RTRKPLQPES (167 aa)) form a transactivation region. Phosphothreonine occurs at positions 14 and 159. The segment at 140–167 (QLADIGAPQPAPAAAPARRTRKPLQPES) is disordered. The Bipartite nuclear localization signal signature appears at 157 to 194 (RRTRKPLQPESLEECDSELDIKRYKNRVASRKCRAKFK). A phosphoserine mark is found at Ser167, Ser173, and Ser186. The interval 178–195 (KRYKNRVASRKCRAKFKH) is basic motif. The bZIP domain occupies 178 to 228 (KRYKNRVASRKCRAKFKHLLQHYREVASAKSSENDRLRLLLKQMCPSLDVD). A leucine-zipper region spans residues 196–228 (LLQHYREVASAKSSENDRLRLLLKQMCPSLDVD). The accessory activation domain stretch occupies residues 229-245 (SIIPRTPDVLHEDLLNF).

It belongs to the bZIP family. Homodimer. Interacts (via b-ZIP domain) with the DNA polymerase processivity factor BMRF1 (via N-terminus); this interaction may inhibit BZLF1-induced transcription of the BMRF1 promoter. Interacts with human UBN1, CRTC2 and RACK1. Interacts (via N-terminus) with human PAX5 (via N-terminus); this interaction inhibits BZLF1-mediated lytic viral reactivation. Interacts (via leucine-zipper domain) with host CEBPA; this interaction induces G1 host cell cycle arrest. Interacts (via C-terminus) with host TP53BP1 (via C-terminus); this interaction is involved in the activation of the viral lytic cycle. Interacts with host chromatin-remodeling ATPase INO80; this interaction participates to the activation of early lytic viral genes by BZLF1. Interacts with host regulator of chromatin SMARCA5/hSNF2H; this interaction participates to the activation of early lytic viral genes by BZLF1. Interacts with host PLSCR1/Phospholipid scramblase 1; this interaction negatively regulates the transcriptional regulatory activity of BZLF1 by preventing the formation of the BZLF1-CBP complex.

It is found in the host nucleus. Transcription factor that acts as a molecular switch to induce the transition from the latent to the lytic or productive phase of the virus cycle. Mediates the switch from the latent to the lytic cycle of infection in cells containing a highly methylated viral genome. Probably binds to silenced chromatin and recruits host chromatin-remodeling enzymes. Regulates this switch by binding to 2 types of ZEBRA response elements (ZREs): the CpG-free AP-1 like elements (latency) and the methylated CpG-containing elements (lytic replication). Activates preferentially the methylated forms of the viral lytic R (BRLF1) and Na (BRRF1) gene promoters, the latters being the first genes activated during Z-mediated reactivation in latently infected cells. BZLF1 and BRLF1 act together to trigger lytic replication. Also binds the lytic origin of replication, oriLyt. Induces G1 cell cycle arrest by stabilizing the host CCAAT/enhancer binding protein CEBPA. This function is important because the lytic cycle preferentially takes place in host cells arrested in G1. The sequence is that of Lytic switch protein BZLF1 from Epstein-Barr virus (strain AG876) (HHV-4).